We begin with the raw amino-acid sequence, 165 residues long: Inorganic pyrophosphatase (165 aa).

The substrate site is built by Lys21, Arg35, and Tyr47. The Mg(2+) site is built by Asp57, Asp62, and Asp94. Tyr131 lines the substrate pocket.

The protein belongs to the PPase family. In terms of assembly, homotrimer. In presence of divalent cations the trimers aggregate to form a hexamer. Requires Mg(2+) as cofactor.

It localises to the cytoplasm. The catalysed reaction is diphosphate + H2O = 2 phosphate + H(+). Catalyzes the hydrolysis of inorganic pyrophosphate (PPi) forming two phosphate ions. This is Inorganic pyrophosphatase from Bacillus sp. (strain PS3).